The chain runs to 90 residues: Small ribosomal subunit protein uS15c (90 aa).

It belongs to the universal ribosomal protein uS15 family. In terms of assembly, part of the 30S ribosomal subunit.

It localises to the plastid. The protein localises to the chloroplast. This chain is Small ribosomal subunit protein uS15c (rps15-A), found in Hordeum vulgare (Barley).